We begin with the raw amino-acid sequence, 494 residues long: Glycerol kinase (494 aa).

Thr12 lines the ADP pocket. Residues Thr12, Thr13, and Ser14 each contribute to the ATP site. Thr12 contributes to the sn-glycerol 3-phosphate binding site. Residue Arg16 coordinates ADP. 4 residues coordinate sn-glycerol 3-phosphate: Arg82, Glu83, Tyr134, and Asp243. The glycerol site is built by Arg82, Glu83, Tyr134, Asp243, and Gln244. ADP-binding residues include Thr265 and Gly308. Residues Thr265, Gly308, Gln312, and Gly408 each coordinate ATP. Gly408 and Asn412 together coordinate ADP.

This sequence belongs to the FGGY kinase family.

It carries out the reaction glycerol + ATP = sn-glycerol 3-phosphate + ADP + H(+). It participates in polyol metabolism; glycerol degradation via glycerol kinase pathway; sn-glycerol 3-phosphate from glycerol: step 1/1. Its activity is regulated as follows. Inhibited by fructose 1,6-bisphosphate (FBP). Its function is as follows. Key enzyme in the regulation of glycerol uptake and metabolism. Catalyzes the phosphorylation of glycerol to yield sn-glycerol 3-phosphate. This chain is Glycerol kinase, found in Marinomonas sp. (strain MWYL1).